Here is a 283-residue protein sequence, read N- to C-terminus: Large ribosomal subunit protein uL2 (283 aa).

2 disordered regions span residues M1–K59 and R222–Q283.

Belongs to the universal ribosomal protein uL2 family. As to quaternary structure, part of the 50S ribosomal subunit. Forms a bridge to the 30S subunit in the 70S ribosome.

In terms of biological role, one of the primary rRNA binding proteins. Required for association of the 30S and 50S subunits to form the 70S ribosome, for tRNA binding and peptide bond formation. It has been suggested to have peptidyltransferase activity; this is somewhat controversial. Makes several contacts with the 16S rRNA in the 70S ribosome. This Salinibacter ruber (strain DSM 13855 / M31) protein is Large ribosomal subunit protein uL2.